The following is a 322-amino-acid chain: MMIKNKKKLLFLCLLVILIATAYISFVTGTIKLSFNDLFTKFTTGSNEAVDSIIDLRLPRILIALMVGAMLAVSGALLQAALQNPLAEANIIGVSSGALIMRALCMLFIPQLYFYLPLLSFIGGLIPFLIIILLHSKFRFNAVSMILVGVALFVLLNGVLEILTQNPLMKIPQGLTMKIWSDVYILAVSALLGLILTLLLSPKLNLLNLDDIQARSIGFNIDRYRWLTGLLAVFLASATVAIVGQLAFLGIIVPHVVRKLVGGNYRVLIPFSTVIGAWLLLVADLLGRVIQPPLEIPANAILMIVGGPMLIYLICQSQRNRI.

9 consecutive transmembrane segments (helical) span residues 9 to 29 (LLFLCLLVILIATAYISFVTG), 61 to 81 (ILIALMVGAMLAVSGALLQAA), 89 to 109 (ANIIGVSSGALIMRALCMLFI), 114 to 134 (FYLPLLSFIGGLIPFLIIILL), 143 to 163 (VSMILVGVALFVLLNGVLEIL), 179 to 199 (IWSDVYILAVSALLGLILTLL), 233 to 253 (VFLASATVAIVGQLAFLGIIV), 267 to 287 (VLIPFSTVIGAWLLLVADLLG), and 294 to 314 (LEIPANAILMIVGGPMLIYLI).

The protein belongs to the binding-protein-dependent transport system permease family. FecCD subfamily.

The protein resides in the cell membrane. Its function is as follows. Part of the binding-protein-dependent transport system for heme-iron. Responsible for the translocation of the substrate across the membrane. This chain is Probable heme-iron transport system permease protein IsdF (isdF), found in Staphylococcus aureus (strain Mu3 / ATCC 700698).